Consider the following 293-residue polypeptide: Elongation factor Ts (293 aa).

The involved in Mg(2+) ion dislocation from EF-Tu stretch occupies residues 80–83; it reads TDFV.

It belongs to the EF-Ts family.

The protein localises to the cytoplasm. Associates with the EF-Tu.GDP complex and induces the exchange of GDP to GTP. It remains bound to the aminoacyl-tRNA.EF-Tu.GTP complex up to the GTP hydrolysis stage on the ribosome. This is Elongation factor Ts from Burkholderia lata (strain ATCC 17760 / DSM 23089 / LMG 22485 / NCIMB 9086 / R18194 / 383).